Consider the following 293-residue polypeptide: Probable tRNA-splicing endonuclease subunit Sen2 (293 aa).

Residues Tyr157, His165, and Lys204 contribute to the active site. A helical membrane pass occupies residues 267 to 287; it reads VVFNHWGVILGFTVLSGLLVY.

This sequence belongs to the tRNA-intron endonuclease family. TRNA splicing endonuclease is a heterotetramer composed of SEN2, SEN15, SEN34/LENG5 and SEN54.

The protein resides in the nucleus. It is found in the membrane. It carries out the reaction pretRNA = a 3'-half-tRNA molecule with a 5'-OH end + a 5'-half-tRNA molecule with a 2',3'-cyclic phosphate end + an intron with a 2',3'-cyclic phosphate and a 5'-hydroxyl terminus.. Its function is as follows. Constitutes one of the two catalytic subunit of the tRNA-splicing endonuclease complex, a complex responsible for identification and cleavage of the splice sites in pre-tRNA. It cleaves pre-tRNA at the 5'- and 3'-splice sites to release the intron. The products are an intron and two tRNA half-molecules bearing 2',3'-cyclic phosphate and 5'-OH termini. There are no conserved sequences at the splice sites, but the intron is invariably located at the same site in the gene, placing the splice sites an invariant distance from the constant structural features of the tRNA body. Probably carries the active site for 5'-splice site cleavage. This Oryza sativa subsp. japonica (Rice) protein is Probable tRNA-splicing endonuclease subunit Sen2.